The chain runs to 144 residues: Glutaredoxin-C6 (144 aa).

Residues 39 to 143 (EAKIRRLISE…PKLVQVGALW (105 aa)) enclose the Glutaredoxin domain. A disulfide bridge links Cys-59 with Cys-62.

Belongs to the glutaredoxin family. CC-type subfamily.

The protein localises to the cytoplasm. In terms of biological role, has a glutathione-disulfide oxidoreductase activity in the presence of NADPH and glutathione reductase. Reduces low molecular weight disulfides and proteins. This Arabidopsis thaliana (Mouse-ear cress) protein is Glutaredoxin-C6 (GRXC6).